The following is a 264-amino-acid chain: 3-methyl-2-oxobutanoate hydroxymethyltransferase (264 aa).

Mg(2+)-binding residues include aspartate 44 and aspartate 83. 3-methyl-2-oxobutanoate-binding positions include 44-45 (DS), aspartate 83, and lysine 112. Glutamate 114 serves as a coordination point for Mg(2+). The active-site Proton acceptor is glutamate 181.

The protein belongs to the PanB family. In terms of assembly, homodecamer; pentamer of dimers. The cofactor is Mg(2+).

It localises to the cytoplasm. It carries out the reaction 3-methyl-2-oxobutanoate + (6R)-5,10-methylene-5,6,7,8-tetrahydrofolate + H2O = 2-dehydropantoate + (6S)-5,6,7,8-tetrahydrofolate. It participates in cofactor biosynthesis; coenzyme A biosynthesis. Its function is as follows. Catalyzes the reversible reaction in which hydroxymethyl group from 5,10-methylenetetrahydrofolate is transferred onto alpha-ketoisovalerate to form ketopantoate. The chain is 3-methyl-2-oxobutanoate hydroxymethyltransferase from Pyrobaculum arsenaticum (strain DSM 13514 / JCM 11321 / PZ6).